The sequence spans 1041 residues: Serine-repeat antigen protein 6 (1041 aa).

Residues 1–34 form the signal peptide; the sequence is MIFFNFKLNRMICPIFFLYIINVLFTQYFIKCEG. Asn-84 carries an N-linked (GlcNAc...) asparagine glycan. A compositionally biased stretch (low complexity) spans 101 to 111; it reads KVVSSSESGKG. Residues 101–173 are disordered; sequence KVVSSSESGK…TESSSETLNK (73 aa). The segment covering 114 to 149 has biased composition (polar residues); it reads VSHTKVTSEGLSDTQPNVTQSVSSSTHTPGSLDSTM. Asn-130 carries N-linked (GlcNAc...) asparagine glycosylation. Residues 150–168 are compositionally biased toward low complexity; sequence STEQHSSVSQSSLPTESSS. Asn-459 carries N-linked (GlcNAc...) asparagine glycosylation. The segment at 500 to 577 is disordered; sequence TLPSESPSES…GDTNYVYDFD (78 aa). Residues 502-515 show a composition bias toward low complexity; that stretch reads PSESPSESSSKSDS. Over residues 521 to 545 the composition is skewed to basic and acidic residues; that stretch reads NDKDKNEDKDDMSKNSKEEFKNDDK. A glycan (N-linked (GlcNAc...) asparagine) is linked at Asn-554. A compositionally biased stretch (low complexity) spans 564 to 574; it reads NINNGDTNYVY. Asn-583 is a glycosylation site (N-linked (GlcNAc...) asparagine). Residue Cys-654 is part of the active site. Residue Asn-684 is glycosylated (N-linked (GlcNAc...) asparagine). Active-site residues include His-820 and Asn-845. N-linked (GlcNAc...) asparagine glycosylation occurs at Asn-984.

This sequence belongs to the peptidase C1 family. Just prior to merozoite egress from host erythrocytes, proteolytically cleaved by SUB1 to generate the active 75kDa form.

Its subcellular location is the parasitophorous vacuole lumen. The protein resides in the parasitophorous vacuole membrane. Functionally, cysteine protease which plays an essential role in merozoite egress from host erythrocytes. May cleave host SPTB/beta spectrin and ANK1/ankyrin-1 which disrupts host erythrocyte actin cytoskeleton and leads to host erythrocyte cell membrane rupture. The sequence is that of Serine-repeat antigen protein 6 from Plasmodium falciparum.